The following is a 543-amino-acid chain: Chaperonin GroEL 1 (543 aa).

ATP-binding positions include T30–P33, K51, D87–T91, G415, and D496.

This sequence belongs to the chaperonin (HSP60) family. Forms a cylinder of 14 subunits composed of two heptameric rings stacked back-to-back. Interacts with the co-chaperonin GroES.

Its subcellular location is the cytoplasm. The enzyme catalyses ATP + H2O + a folded polypeptide = ADP + phosphate + an unfolded polypeptide.. In terms of biological role, together with its co-chaperonin GroES, plays an essential role in assisting protein folding. The GroEL-GroES system forms a nano-cage that allows encapsulation of the non-native substrate proteins and provides a physical environment optimized to promote and accelerate protein folding. The polypeptide is Chaperonin GroEL 1 (Mesorhizobium japonicum (strain LMG 29417 / CECT 9101 / MAFF 303099) (Mesorhizobium loti (strain MAFF 303099))).